Consider the following 557-residue polypeptide: Mercuric reductase (557 aa).

Positions 1–65 (MILLSIEGMT…AIEALGYIAK (65 aa)) constitute an HMA domain. 2 residues coordinate a metal cation: cysteine 11 and cysteine 14. Residues alanine 106 and alanine 126 each coordinate FAD. Cysteine 133 and cysteine 138 are oxidised to a cystine. FAD-binding residues include lysine 142, alanine 207, aspartate 399, and valine 407. Cysteine 554 and cysteine 555 together coordinate Hg(2+).

Belongs to the class-I pyridine nucleotide-disulfide oxidoreductase family. Homodimer. Requires FAD as cofactor.

It carries out the reaction Hg + NADP(+) + H(+) = Hg(2+) + NADPH. Resistance to Hg(2+) in bacteria appears to be governed by a specialized system which includes mercuric reductase. MerA protein is responsible for volatilizing mercury as Hg(0). The polypeptide is Mercuric reductase (merA) (Shewanella putrefaciens (Pseudomonas putrefaciens)).